The sequence spans 224 residues: tRNA (guanine-N(7)-)-methyltransferase (224 aa).

3 residues coordinate S-adenosyl-L-methionine: E52, D77, and D126. D126 is an active-site residue. 2 residues coordinate substrate: K130 and D162.

This sequence belongs to the class I-like SAM-binding methyltransferase superfamily. TrmB family.

The enzyme catalyses guanosine(46) in tRNA + S-adenosyl-L-methionine = N(7)-methylguanosine(46) in tRNA + S-adenosyl-L-homocysteine. The protein operates within tRNA modification; N(7)-methylguanine-tRNA biosynthesis. Its function is as follows. Catalyzes the formation of N(7)-methylguanine at position 46 (m7G46) in tRNA. In Christiangramia forsetii (strain DSM 17595 / CGMCC 1.15422 / KT0803) (Gramella forsetii), this protein is tRNA (guanine-N(7)-)-methyltransferase.